A 132-amino-acid chain; its full sequence is NADPH-dependent 7-cyano-7-deazaguanine reductase (132 aa).

The active-site Thioimide intermediate is the cysteine 48. Aspartate 55 (proton donor) is an active-site residue. Substrate is bound by residues 70-72 (LEL) and 89-90 (ME).

It belongs to the GTP cyclohydrolase I family. QueF type 1 subfamily.

The protein resides in the cytoplasm. The enzyme catalyses 7-aminomethyl-7-carbaguanine + 2 NADP(+) = 7-cyano-7-deazaguanine + 2 NADPH + 3 H(+). The protein operates within tRNA modification; tRNA-queuosine biosynthesis. Its function is as follows. Catalyzes the NADPH-dependent reduction of 7-cyano-7-deazaguanine (preQ0) to 7-aminomethyl-7-deazaguanine (preQ1). The protein is NADPH-dependent 7-cyano-7-deazaguanine reductase of Elusimicrobium minutum (strain Pei191).